We begin with the raw amino-acid sequence, 368 residues long: CST complex subunit STN1 (368 aa).

The interval Met1–Ser185 is interaction with CTC1. The segment at residues Val57 to Val155 is a DNA-binding region (OB). 2 winged helix-turn-helix (wHTH) regions span residues Glu191 to Arg295 and Glu296 to Phe368.

This sequence belongs to the STN1 family. As to quaternary structure, component of the CST complex, composed of TEN1/C17orf106, CTC1/C17orf68 and STN1; in the complex interacts directly with TEN1 and CTC1. Interacts with ACD/TPP1, POT1 and POLA1.

It localises to the nucleus. It is found in the chromosome. The protein resides in the telomere. In terms of biological role, component of the CST complex proposed to act as a specialized replication factor promoting DNA replication under conditions of replication stress or natural replication barriers such as the telomere duplex. The CST complex binds single-stranded DNA with high affinity in a sequence-independent manner, while isolated subunits bind DNA with low affinity by themselves. Initially the CST complex has been proposed to protect telomeres from DNA degradation. However, the CST complex has been shown to be involved in several aspects of telomere replication. The CST complex inhibits telomerase and is involved in telomere length homeostasis; it is proposed to bind to newly telomerase-synthesized 3' overhangs and to terminate telomerase action implicating the association with the ACD:POT1 complex thus interfering with its telomerase stimulation activity. The CST complex is also proposed to be involved in fill-in synthesis of the telomeric C-strand probably implicating recruitment and activation of DNA polymerase alpha. The CST complex facilitates recovery from many forms of exogenous DNA damage; seems to be involved in the re-initiation of DNA replication at repaired forks and/or dormant origins. Required for efficicient replication of the duplex region of the telomere. Promotes efficient replication of lagging-strand telomeres. Promotes general replication start following replication-fork stalling implicating new origin firing. May be in involved in C-strand fill-in during late S/G2 phase independent of its role in telomere duplex replication. The protein is CST complex subunit STN1 of Macaca fascicularis (Crab-eating macaque).